We begin with the raw amino-acid sequence, 197 residues long: Ubiquitin-conjugating enzyme E2 T (197 aa).

In terms of domain architecture, UBC core spans 2 to 152; that stretch reads QRASRLKREL…ARQWTEKHAR (151 aa). C86 serves as the catalytic Glycyl thioester intermediate. Glycyl lysine isopeptide (Lys-Gly) (interchain with G-Cter in ubiquitin) cross-links involve residues K91 and K182. The disordered stretch occupies residues 149–197; it reads KHARQKQKADEEEMLDNLPEAGDSRVHNSTQKRKASQLVGIEKKFHPDV. At S184 the chain carries Phosphoserine. Residues K191 and K192 each participate in a glycyl lysine isopeptide (Lys-Gly) (interchain with G-Cter in SUMO2) cross-link.

Belongs to the ubiquitin-conjugating enzyme family. Directly interacts with FANCL. Interacts with BRCA1. In terms of processing, auto-ubiquitinated. Effects of auto-monoubiquitination at Lys-91 and Lys-182 are unclear: according to a report, monoubiquitination inactivates E2 enzyme activity. In contrast, according to another report, autoubiquitination does not affect E2 enzyme activity.

Its subcellular location is the nucleus. The catalysed reaction is S-ubiquitinyl-[E1 ubiquitin-activating enzyme]-L-cysteine + [E2 ubiquitin-conjugating enzyme]-L-cysteine = [E1 ubiquitin-activating enzyme]-L-cysteine + S-ubiquitinyl-[E2 ubiquitin-conjugating enzyme]-L-cysteine.. It functions in the pathway protein modification; protein ubiquitination. Functionally, accepts ubiquitin from the E1 complex and catalyzes its covalent attachment to other proteins. Catalyzes monoubiquitination. Involved in mitomycin-C (MMC)-induced DNA repair. Acts as a specific E2 ubiquitin-conjugating enzyme for the Fanconi anemia complex by associating with E3 ubiquitin-protein ligase FANCL and catalyzing monoubiquitination of FANCD2, a key step in the DNA damage pathway. Also mediates monoubiquitination of FANCL and FANCI. May contribute to ubiquitination and degradation of BRCA1. In vitro able to promote polyubiquitination using all 7 ubiquitin Lys residues, but may prefer 'Lys-11'-, 'Lys-27'-, 'Lys-48'- and 'Lys-63'-linked polyubiquitination. This is Ubiquitin-conjugating enzyme E2 T (UBE2T) from Homo sapiens (Human).